Reading from the N-terminus, the 715-residue chain is Polyribonucleotide nucleotidyltransferase (715 aa).

The Mg(2+) site is built by Asp-497 and Asp-503. Residues 564–623 enclose the KH domain; it reads PRLLTMKIDPEQIGLVIGPGGKTIKSITEQTGSKIDIADDGTVTIAAIQAKKAERARDLI. One can recognise an S1 motif domain in the interval 633-701; it reads GEVYLGRVTR…NKGRLNLTRL (69 aa).

The protein belongs to the polyribonucleotide nucleotidyltransferase family. Mg(2+) serves as cofactor.

It localises to the cytoplasm. It carries out the reaction RNA(n+1) + phosphate = RNA(n) + a ribonucleoside 5'-diphosphate. Its function is as follows. Involved in mRNA degradation. Catalyzes the phosphorolysis of single-stranded polyribonucleotides processively in the 3'- to 5'-direction. In Crocosphaera subtropica (strain ATCC 51142 / BH68) (Cyanothece sp. (strain ATCC 51142)), this protein is Polyribonucleotide nucleotidyltransferase.